A 197-amino-acid polypeptide reads, in one-letter code: uncharacterized protein (197 aa).

This is an uncharacterized protein from Acanthamoeba polyphaga (Amoeba).